The chain runs to 249 residues: Probable septum site-determining protein MinC (249 aa).

A disordered region spans residues 89 to 130 (SLFEPGMPPAMKGGRPAPDFEVPEVDPADPPKAGKGKAAAPI). A compositionally biased stretch (low complexity) spans 119–129 (PKAGKGKAAAP).

This sequence belongs to the MinC family. In terms of assembly, interacts with MinD and FtsZ.

Cell division inhibitor that blocks the formation of polar Z ring septums. Rapidly oscillates between the poles of the cell to destabilize FtsZ filaments that have formed before they mature into polar Z rings. Prevents FtsZ polymerization. This is Probable septum site-determining protein MinC from Rhizobium meliloti (strain 1021) (Ensifer meliloti).